Consider the following 1266-residue polypeptide: Kinesin-like protein KIN-12G (1266 aa).

A disordered region spans residues 1–22 (MPSDCGDDDHGGGSAPAGFELQ). In terms of domain architecture, Kinesin motor spans 32 to 369 (NVQVVIRVRP…LKFAQRAKYI (338 aa)). 113–120 (GQTGSGKT) provides a ligand contact to ATP. 4 coiled-coil regions span residues 613 to 668 (MEFI…SEAV), 817 to 854 (RSELTDLQLQLDEMHEENDKLMGLYEKAMQERDEFKRK), 1029 to 1060 (ARESETALRSKIDGLKVKLRSFEAQRKEAERV), and 1084 to 1120 (SELLRSEEERTKLLSELKKSREQLIMVQKEIKSMNRH).

The protein belongs to the TRAFAC class myosin-kinesin ATPase superfamily. Kinesin family. KIN-12 subfamily.

The polypeptide is Kinesin-like protein KIN-12G (Oryza sativa subsp. japonica (Rice)).